The following is a 398-amino-acid chain: 1-deoxy-D-xylulose 5-phosphate reductoisomerase (398 aa).

Positions 11, 12, 13, 14, 38, 39, and 125 each coordinate NADPH. A 1-deoxy-D-xylulose 5-phosphate-binding site is contributed by Lys126. Glu127 serves as a coordination point for NADPH. Asp151 is a Mn(2+) binding site. Residues Ser152, Glu153, Ser179, and His202 each contribute to the 1-deoxy-D-xylulose 5-phosphate site. Glu153 provides a ligand contact to Mn(2+). Gly208 contacts NADPH. 4 residues coordinate 1-deoxy-D-xylulose 5-phosphate: Ser215, Asn220, Lys221, and Glu224. Glu224 is a binding site for Mn(2+).

Belongs to the DXR family. Mg(2+) serves as cofactor. Mn(2+) is required as a cofactor.

The enzyme catalyses 2-C-methyl-D-erythritol 4-phosphate + NADP(+) = 1-deoxy-D-xylulose 5-phosphate + NADPH + H(+). It functions in the pathway isoprenoid biosynthesis; isopentenyl diphosphate biosynthesis via DXP pathway; isopentenyl diphosphate from 1-deoxy-D-xylulose 5-phosphate: step 1/6. Functionally, catalyzes the NADPH-dependent rearrangement and reduction of 1-deoxy-D-xylulose-5-phosphate (DXP) to 2-C-methyl-D-erythritol 4-phosphate (MEP). The polypeptide is 1-deoxy-D-xylulose 5-phosphate reductoisomerase (Burkholderia pseudomallei (strain 1106a)).